An 874-amino-acid polypeptide reads, in one-letter code: MKVTQIRQAYLDFFAQKGHQIVPSSPVVPGDDPTLLFTNAGMNQFKDVFLGFDKRSYTRATTAQKCIRAGGKHNDLDNVGYTARHHTFFEMLGNFSFGDYFKKDAIQFAWDLLTQVFELPKDKLLVTVYAEDDEAYAIWKDQIGVPAERIIRIGDNKGARYASDNFWMMGDTGPCGPCTEIFYDHGEHIPGGPPGSPDEDGDRFIEIWNNVFMQFNRDEAGVMHPLPKPSVDTGMGLERIAAVLQHVHSNYEIDLFVNLIKAAKDTVDGAGGENCDAQSPSLKVIADHIRACSFIVVDGVIPGNAGRGYVLRRIARRAIRHGYKLGARKPFFYQLVPALVKEMGDAYPELRAAQDKVSEVLKQEEERFFQTIANGMEILDGALAGGAKVVDGETAFRLHDTFGFPLDLTADVCRERGVTVDSEGFEVAMQKQRDQARAAGKFKVAQGLDYKGVPTRFHGYETLKHEGAKITALYLDGSAVNSVKAGDAAVVVLDNTPFYAESGGQVGDKGELRNEAARFTVDDTFKIQADVFGHQGEVLEGELKVGDTLNALVDIALRNDTMRNHSATHILHKALREVLGDHVQQKGSLVDASKTRFDFTHNAPITAEQIRRIEDIVNAEILDNSATSGKVMSLEDAQKTGAMMLFGEKYGDEVRVLEIGSSKELCGGTHVSRTGDIGSLKIVSEGGVAAGIRRVEAVTGQNALHFLQGLEDKINEAATILKTHPGDLVNRVAQLQESLRLAERELEKVNSKLAASQGDELAGQAIDVNGLKVLAARLDGADAGVLRETMDALKAKLKTAAIVLASVQGDKVSLIAGVTADSIAKVKAGDLVNFVAQQVGGKGGGKPEMAMAGGNDPSKLGAALDGVKDWVASK.

4 residues coordinate Zn(2+): histidine 565, histidine 569, cysteine 666, and histidine 670.

Belongs to the class-II aminoacyl-tRNA synthetase family. Zn(2+) is required as a cofactor.

The protein resides in the cytoplasm. It catalyses the reaction tRNA(Ala) + L-alanine + ATP = L-alanyl-tRNA(Ala) + AMP + diphosphate. Functionally, catalyzes the attachment of alanine to tRNA(Ala) in a two-step reaction: alanine is first activated by ATP to form Ala-AMP and then transferred to the acceptor end of tRNA(Ala). Also edits incorrectly charged Ser-tRNA(Ala) and Gly-tRNA(Ala) via its editing domain. This is Alanine--tRNA ligase from Polynucleobacter asymbioticus (strain DSM 18221 / CIP 109841 / QLW-P1DMWA-1) (Polynucleobacter necessarius subsp. asymbioticus).